The following is a 151-amino-acid chain: Large ribosomal subunit protein uL22 (151 aa).

Over residues 1-18 the composition is skewed to polar residues; sequence MARINYSINGDPETTSKA. The tract at residues 1 to 23 is disordered; the sequence is MARINYSINGDPETTSKAMGSEL.

This sequence belongs to the universal ribosomal protein uL22 family. As to quaternary structure, part of the 50S ribosomal subunit.

Its function is as follows. This protein binds specifically to 23S rRNA. It makes multiple contacts with different domains of the 23S rRNA in the assembled 50S subunit and ribosome. Functionally, the globular domain of the protein is located near the polypeptide exit tunnel on the outside of the subunit, while an extended beta-hairpin is found that lines the wall of the exit tunnel in the center of the 70S ribosome. This is Large ribosomal subunit protein uL22 from Methanosarcina acetivorans (strain ATCC 35395 / DSM 2834 / JCM 12185 / C2A).